Reading from the N-terminus, the 360-residue chain is Membrane-bound lytic murein transglycosylase C (360 aa).

The N-terminal stretch at 1–16 (MKKFFALALVAPLLIS) is a signal peptide. C17 is lipidated: N-palmitoyl cysteine. A lipid anchor (S-diacylglycerol cysteine) is attached at C17.

Belongs to the transglycosylase Slt family.

It localises to the cell outer membrane. It catalyses the reaction Exolytic cleavage of the (1-&gt;4)-beta-glycosidic linkage between N-acetylmuramic acid (MurNAc) and N-acetylglucosamine (GlcNAc) residues in peptidoglycan, from either the reducing or the non-reducing ends of the peptidoglycan chains, with concomitant formation of a 1,6-anhydrobond in the MurNAc residue.. Murein-degrading enzyme. May play a role in recycling of muropeptides during cell elongation and/or cell division. In Citrobacter koseri (strain ATCC BAA-895 / CDC 4225-83 / SGSC4696), this protein is Membrane-bound lytic murein transglycosylase C.